A 281-amino-acid polypeptide reads, in one-letter code: CDAN1-interacting nuclease 1 (281 aa).

T114 carries the phosphothreonine modification.

Its subcellular location is the nucleus. It is found in the cytoplasm. In terms of biological role, plays a role in erythroid cell differentiation. The sequence is that of CDAN1-interacting nuclease 1 from Mus musculus (Mouse).